The chain runs to 201 residues: FMN-dependent NADH:quinone oxidoreductase (201 aa).

FMN-binding positions include serine 9, 16–18, and 93–96; these read SVS and MYNF.

It belongs to the azoreductase type 1 family. In terms of assembly, homodimer. The cofactor is FMN.

The catalysed reaction is 2 a quinone + NADH + H(+) = 2 a 1,4-benzosemiquinone + NAD(+). It carries out the reaction N,N-dimethyl-1,4-phenylenediamine + anthranilate + 2 NAD(+) = 2-(4-dimethylaminophenyl)diazenylbenzoate + 2 NADH + 2 H(+). Its function is as follows. Quinone reductase that provides resistance to thiol-specific stress caused by electrophilic quinones. In terms of biological role, also exhibits azoreductase activity. Catalyzes the reductive cleavage of the azo bond in aromatic azo compounds to the corresponding amines. This chain is FMN-dependent NADH:quinone oxidoreductase, found in Gluconacetobacter diazotrophicus (strain ATCC 49037 / DSM 5601 / CCUG 37298 / CIP 103539 / LMG 7603 / PAl5).